Here is a 195-residue protein sequence, read N- to C-terminus: MEKKLLGIAILFVTVVSVLAGDPNVPTCLCEEPTLLGRKVIVSQETKDKIEEAVQAITDKDEISGRGFSIFGGHPAFKECGKYECRTVTSEDSRCYNFFPFHHFPSECPVSVSACEPTFGYTTSNELRIIVQAPKAGFRQCVWQHKCRAYGSNFCQRTGRCTQQRSVVRLVTYDLEKGVFFCENVRTCCGCPCRS.

A signal peptide spans 1–20 (MEKKLLGIAILFVTVVSVLA). Intrachain disulfides connect Cys28–Cys188, Cys30–Cys115, Cys80–Cys182, Cys85–Cys141, Cys95–Cys189, Cys108–Cys161, Cys147–Cys191, and Cys155–Cys193.

This sequence belongs to the coagulin family. Coagulogen is cleaved after Arg-38 and Arg-66 by a clotting enzyme contained in the hemocyte and activated by a bacterial endotoxin (lipopolysaccharide). This cleavage releases the peptide C and leaves 2 chains of coagulin, A and B, linked by two disulfide bonds. Coagulin molecules interlink to form a gel. Hemolymph.

Its subcellular location is the secreted. Its function is as follows. Coagulogen is a gel-forming protein of hemolymph; it hinders the spread of invaders by immobilizing them. This is Coagulogen from Limulus polyphemus (Atlantic horseshoe crab).